Here is a 416-residue protein sequence, read N- to C-terminus: Actin-like protein 9 (416 aa).

A disordered region spans residues Met-1–Asn-23.

The protein belongs to the actin family. In terms of assembly, interacts with ACTL7A.

Its subcellular location is the cytoplasmic vesicle. It is found in the secretory vesicle. The protein localises to the acrosome. The protein resides in the cytoplasm. It localises to the cytoskeleton. Its subcellular location is the perinuclear theca. Its function is as follows. Testis-specic protein that plays an important role in fusion of proacrosomal vesicles and perinuclear theca formation. The protein is Actin-like protein 9 (ACTL9) of Bos taurus (Bovine).